The primary structure comprises 76 residues: Small ribosomal subunit protein bS18 (76 aa).

This sequence belongs to the bacterial ribosomal protein bS18 family. In terms of assembly, part of the 30S ribosomal subunit. Forms a tight heterodimer with protein bS6.

Functionally, binds as a heterodimer with protein bS6 to the central domain of the 16S rRNA, where it helps stabilize the platform of the 30S subunit. The polypeptide is Small ribosomal subunit protein bS18 (Marinomonas sp. (strain MWYL1)).